The sequence spans 290 residues: 4-diphosphocytidyl-2-C-methyl-D-erythritol kinase (290 aa).

Lysine 13 is a catalytic residue. 93-103 lines the ATP pocket; that stretch reads PVQAGLGGGSA. Aspartate 135 is an active-site residue.

It belongs to the GHMP kinase family. IspE subfamily.

It carries out the reaction 4-CDP-2-C-methyl-D-erythritol + ATP = 4-CDP-2-C-methyl-D-erythritol 2-phosphate + ADP + H(+). It participates in isoprenoid biosynthesis; isopentenyl diphosphate biosynthesis via DXP pathway; isopentenyl diphosphate from 1-deoxy-D-xylulose 5-phosphate: step 3/6. In terms of biological role, catalyzes the phosphorylation of the position 2 hydroxy group of 4-diphosphocytidyl-2C-methyl-D-erythritol. The chain is 4-diphosphocytidyl-2-C-methyl-D-erythritol kinase from Desulfitobacterium hafniense (strain Y51).